Consider the following 391-residue polypeptide: Transaldolase (391 aa).

Positions 1 to 329 (MGKNLLEQLR…RLKVLDGQEH (329 aa)) are transaldolase. Lysine 136 functions as the Schiff-base intermediate with substrate in the catalytic mechanism. EF-hand domains lie at 329–364 (HIKH…FDAL) and 365–387 (DRDH…AFRL). Aspartate 342, aspartate 344, aspartate 346, glutamate 353, aspartate 365, aspartate 367, aspartate 369, lysine 371, and glutamate 376 together coordinate Ca(2+).

This sequence belongs to the transaldolase family. Type 1 subfamily.

The protein resides in the cytoplasm. The catalysed reaction is D-sedoheptulose 7-phosphate + D-glyceraldehyde 3-phosphate = D-erythrose 4-phosphate + beta-D-fructose 6-phosphate. It participates in carbohydrate degradation; pentose phosphate pathway; D-glyceraldehyde 3-phosphate and beta-D-fructose 6-phosphate from D-ribose 5-phosphate and D-xylulose 5-phosphate (non-oxidative stage): step 2/3. Functionally, transaldolase is important for the balance of metabolites in the pentose-phosphate pathway. The protein is Transaldolase of Synechocystis sp. (strain ATCC 27184 / PCC 6803 / Kazusa).